Here is a 395-residue protein sequence, read N- to C-terminus: Probable nitrate/nitrite transporter NarK2 (395 aa).

12 consecutive transmembrane segments (helical) span residues 8–28 (LVLA…IGPL), 45–65 (LLVA…GPLT), 72–92 (AMLI…GVAA), 98–118 (ALLV…AVGI), 131–151 (GFST…AFFT), 157–177 (WFGL…TAVV), 205–225 (LPVT…FVAF), 244–266 (AGAR…GWLS), 274–294 (VVLA…LQPP), 301–321 (ATFI…FAWV), 333–353 (VTGI…LVMG), and 365–385 (VGLL…ALHA).

It belongs to the major facilitator superfamily. Nitrate/nitrite porter (TC 2.A.1.8) family.

The protein resides in the cell membrane. Its function is as follows. Involved in excretion of nitrite produced by the dissimilatory reduction of nitrate. The chain is Probable nitrate/nitrite transporter NarK2 (narK2) from Mycobacterium tuberculosis (strain CDC 1551 / Oshkosh).